The following is a 316-amino-acid chain: MEQNLNSEQKPQSSAKPRGKSSRSTILAQTVKTGIIKSNLIPMWAGLTLGMYKNKMTFIDNIPEMIFSTVGSALVIGAAGAFNNVYDRDIDAIMPRTQSRPTVTGEMSAKSTLSLAIVMLIIGLAVLALASPLAAAFGLLGVFLYVVPYTMWTKRRTIYNTEIGSISGAVPPLIGWSAVSTDITHPAIARFIFVMVIWQMPHFYAIAIRKRVDYEAASVPMLPVVKGMRRTYYQTNFYLILLILSSFLFGSLSVGIMLVALLLSIAWLVMSIYGYHSNKDQVKWATKMFVFSLFHMTILFTTVIVYSLVGVIFKLY.

The segment covering 1 to 15 (MEQNLNSEQKPQSSA) has biased composition (polar residues). The tract at residues 1 to 24 (MEQNLNSEQKPQSSAKPRGKSSRS) is disordered. 7 helical membrane passes run 62–82 (IPEMIFSTVGSALVIGAAGAF), 117–137 (IVMLIIGLAVLALASPLAAAF), 163–183 (IGSISGAVPPLIGWSAVSTDI), 188–208 (IARFIFVMVIWQMPHFYAIAI), 231–251 (TYYQTNFYLILLILSSFLFGS), 252–272 (LSVGIMLVALLLSIAWLVMSI), and 293–313 (LFHMTILFTTVIVYSLVGVIF).

It belongs to the UbiA prenyltransferase family. Protoheme IX farnesyltransferase subfamily. As to quaternary structure, interacts with CtaA.

It localises to the cell membrane. It carries out the reaction heme b + (2E,6E)-farnesyl diphosphate + H2O = Fe(II)-heme o + diphosphate. Its pathway is porphyrin-containing compound metabolism; heme O biosynthesis; heme O from protoheme: step 1/1. In terms of biological role, converts heme B (protoheme IX) to heme O by substitution of the vinyl group on carbon 2 of heme B porphyrin ring with a hydroxyethyl farnesyl side group. This chain is Protoheme IX farnesyltransferase 2, found in Lysinibacillus sphaericus (strain C3-41).